We begin with the raw amino-acid sequence, 283 residues long: Phosphatidylserine decarboxylase proenzyme (283 aa).

Residues aspartate 89, histidine 146, and serine 249 each act as charge relay system; for autoendoproteolytic cleavage activity in the active site. Residue serine 249 is the Schiff-base intermediate with substrate; via pyruvic acid; for decarboxylase activity of the active site. A Pyruvic acid (Ser); by autocatalysis modification is found at serine 249.

Belongs to the phosphatidylserine decarboxylase family. PSD-B subfamily. Prokaryotic type I sub-subfamily. In terms of assembly, heterodimer of a large membrane-associated beta subunit and a small pyruvoyl-containing alpha subunit. The cofactor is pyruvate. In terms of processing, is synthesized initially as an inactive proenzyme. Formation of the active enzyme involves a self-maturation process in which the active site pyruvoyl group is generated from an internal serine residue via an autocatalytic post-translational modification. Two non-identical subunits are generated from the proenzyme in this reaction, and the pyruvate is formed at the N-terminus of the alpha chain, which is derived from the carboxyl end of the proenzyme. The autoendoproteolytic cleavage occurs by a canonical serine protease mechanism, in which the side chain hydroxyl group of the serine supplies its oxygen atom to form the C-terminus of the beta chain, while the remainder of the serine residue undergoes an oxidative deamination to produce ammonia and the pyruvoyl prosthetic group on the alpha chain. During this reaction, the Ser that is part of the protease active site of the proenzyme becomes the pyruvoyl prosthetic group, which constitutes an essential element of the active site of the mature decarboxylase.

It localises to the cell membrane. The catalysed reaction is a 1,2-diacyl-sn-glycero-3-phospho-L-serine + H(+) = a 1,2-diacyl-sn-glycero-3-phosphoethanolamine + CO2. It functions in the pathway phospholipid metabolism; phosphatidylethanolamine biosynthesis; phosphatidylethanolamine from CDP-diacylglycerol: step 2/2. In terms of biological role, catalyzes the formation of phosphatidylethanolamine (PtdEtn) from phosphatidylserine (PtdSer). The protein is Phosphatidylserine decarboxylase proenzyme of Legionella pneumophila (strain Corby).